The primary structure comprises 474 residues: tRNA-2-methylthio-N(6)-dimethylallyladenosine synthase (474 aa).

One can recognise an MTTase N-terminal domain in the interval Lys3–Arg120. Positions 12, 49, 83, 157, 161, and 164 each coordinate [4Fe-4S] cluster. In terms of domain architecture, Radical SAM core spans Arg143–Arg375. The region spanning Arg378–Arg441 is the TRAM domain.

The protein belongs to the methylthiotransferase family. MiaB subfamily. Monomer. Requires [4Fe-4S] cluster as cofactor.

The protein localises to the cytoplasm. It carries out the reaction N(6)-dimethylallyladenosine(37) in tRNA + (sulfur carrier)-SH + AH2 + 2 S-adenosyl-L-methionine = 2-methylsulfanyl-N(6)-dimethylallyladenosine(37) in tRNA + (sulfur carrier)-H + 5'-deoxyadenosine + L-methionine + A + S-adenosyl-L-homocysteine + 2 H(+). In terms of biological role, catalyzes the methylthiolation of N6-(dimethylallyl)adenosine (i(6)A), leading to the formation of 2-methylthio-N6-(dimethylallyl)adenosine (ms(2)i(6)A) at position 37 in tRNAs that read codons beginning with uridine. The protein is tRNA-2-methylthio-N(6)-dimethylallyladenosine synthase of Shewanella baltica (strain OS155 / ATCC BAA-1091).